The chain runs to 1252 residues: DNA-directed RNA polymerase subunit beta (1252 aa).

It belongs to the RNA polymerase beta chain family. As to quaternary structure, the RNAP catalytic core consists of 2 alpha, 1 beta, 1 beta' and 1 omega subunit. When a sigma factor is associated with the core the holoenzyme is formed, which can initiate transcription.

The enzyme catalyses RNA(n) + a ribonucleoside 5'-triphosphate = RNA(n+1) + diphosphate. In terms of biological role, DNA-dependent RNA polymerase catalyzes the transcription of DNA into RNA using the four ribonucleoside triphosphates as substrates. This Chlamydia muridarum (strain MoPn / Nigg) protein is DNA-directed RNA polymerase subunit beta.